The sequence spans 410 residues: 23S rRNA (uracil(747)-C(5))-methyltransferase (410 aa).

Residues cysteine 61, cysteine 67, cysteine 70, and cysteine 137 each contribute to the [4Fe-4S] cluster site. Residues glutamine 253, tyrosine 279, glutamate 300, and aspartate 341 each coordinate S-adenosyl-L-methionine. The active-site Nucleophile is cysteine 367.

Belongs to the class I-like SAM-binding methyltransferase superfamily. RNA M5U methyltransferase family.

The catalysed reaction is uridine(747) in 23S rRNA + S-adenosyl-L-methionine = 5-methyluridine(747) in 23S rRNA + S-adenosyl-L-homocysteine + H(+). With respect to regulation, activated by magnesium ions. Catalyzes the formation of 5-methyl-uridine at position equivalent to 747 (m5U747) in 23S rRNA (m5U859 in the P.abyssi numbering). This Pyrococcus abyssi (strain GE5 / Orsay) protein is 23S rRNA (uracil(747)-C(5))-methyltransferase.